The primary structure comprises 481 residues: Tryptophan--tRNA ligase, cytoplasmic (481 aa).

In terms of domain architecture, WHEP-TRS spans serine 12–proline 68. The residue at position 158 (lysine 158) is an N6-succinyllysine. The short motif at proline 168 to histidine 177 is the 'HIGH' region element. The 'KMSKS' region motif lies at lysine 353–serine 357. Position 355 is a phosphoserine (serine 355).

It belongs to the class-I aminoacyl-tRNA synthetase family. As to quaternary structure, homodimer. Interacts with oxidized form of GAPDH. Post-translationally, proteolytic cleavage generates 2 forms; T1-TrpRS and T2-TrpRS. As to expression, isoform 2 is widely expressed, isoform 1 is found only in embryonic stem cells.

Its subcellular location is the cytoplasm. It carries out the reaction tRNA(Trp) + L-tryptophan + ATP = L-tryptophyl-tRNA(Trp) + AMP + diphosphate + H(+). In terms of biological role, catalyzes the attachment of tryptophan to tRNA(Trp) in a two-step reaction: tryptophan is first activated by ATP to form Trp-AMP and then transferred to the acceptor end of the tRNA(Trp). Could also possess an angiostatic activity. The chain is Tryptophan--tRNA ligase, cytoplasmic from Mus musculus (Mouse).